The sequence spans 677 residues: Opioid growth factor receptor (677 aa).

The residue at position 1 (Met1) is an N-acetylmethionine. The segment covering 1-29 (MDDPDCDSTWEEDEEDAEDAEDEDCEDGE) has biased composition (acidic residues). A disordered region spans residues 1–63 (MDDPDCDSTW…SSFQSRMTGS (63 aa)). Residues 54-63 (SSFQSRMTGS) are compositionally biased toward polar residues. The Bipartite nuclear localization signal signature appears at 267–283 (RRQLVHFAWEHFRPRCK). The disordered stretch occupies residues 295–407 (FKPSSLPHPL…EPGPQSASEV (113 aa)). 2 positions are modified to phosphoserine: Ser299 and Ser315. Basic and acidic residues-rich tracts occupy residues 305–323 (EGSRKVEEEGSPGDPDHEA) and 331–345 (GPEHSKGGGRVDEGP). 6 positions are modified to phosphoserine: Ser349, Ser361, Ser378, Ser382, Ser403, and Ser420. Positions 361–395 (SQGDEAGGHGEDRPEPLSPKESKKRKLELSRREQP) are enriched in basic and acidic residues. A compositionally biased stretch (polar residues) spans 421-431 (QGSLRTGTQEV). The disordered stretch occupies residues 421–677 (QGSLRTGTQE…VESSAKSGKP (257 aa)). A compositionally biased stretch (low complexity) spans 466 to 476 (GDSAAVASGGA). A Phosphoserine modification is found at Ser484. 7 consecutive repeat copies span residues 517–536 (SPSETPGPSPAGPAGDEPAE), 537–556 (SPSETPGPRPAGPAGDEPAE), 557–576 (SPSETPGPRPAGPAGDEPAE), 577–596 (SPSETPGPSPAGPTRDEPAE), 597–616 (SPSETPGPRPAGPAGDEPAE), 617–636 (SPSETPGPRPAGPAGDEPAE), and 637–656 (SPSETPGPSPAGPTRDEPAK). The tract at residues 517–656 (SPSETPGPSP…AGPTRDEPAK (140 aa)) is 7 X 20 AA approximate tandem repeats of [ST]-P-S-E-T-P-G-P-[SR]-P-A-G-P-[AT]-[GR]-D-E-P-A-[EK]. Residues 528–538 (GPAGDEPAESP) show a composition bias toward low complexity. Phosphoserine occurs at positions 537 and 557. Ser617 and Ser637 each carry phosphoserine.

The protein belongs to the opioid growth factor receptor family. As to expression, highly expressed in the heart and liver, moderately in skeletal muscle and kidney and to a lesser extent in brain and pancreas. Expressed in fetal tissues including liver and kidney.

It localises to the cytoplasm. The protein localises to the nucleus. Receptor for opioid growth factor (OGF), also known as Met-enkephalin. Seems to be involved in growth regulation. The chain is Opioid growth factor receptor (OGFR) from Homo sapiens (Human).